The chain runs to 211 residues: Mitotic spindle assembly checkpoint protein MAD2B (211 aa).

The region spanning 13–203 is the HORMA domain; sequence QVVADILCEF…SDILKMQLYV (191 aa).

In terms of assembly, homooligomer. Interacts with rev1. Interacts with rev3l. Interacts with fzr1 (in complex with the anaphase promoting complex APC). May interact with cdc20.

Its subcellular location is the nucleus. It localises to the cytoplasm. The protein localises to the cytoskeleton. It is found in the spindle. In terms of biological role, adapter protein able to interact with different proteins and involved in different biological processes. Mediates the interaction between the error-prone DNA polymerase zeta catalytic subunit rev3l and the inserter polymerase rev1, thereby mediating the second polymerase switching in translesion DNA synthesis. Translesion DNA synthesis releases the replication blockade of replicative polymerases, stalled in presence of DNA lesions. May also play a role in signal transduction in response to DNA damage. May regulate the activation of the anaphase promoting complex APC thereby regulating progression through the cell cycle. Through transcriptional regulation may play a role in epithelial-mesenchymal transdifferentiation. Inhibits the fzr1-APC complex activity during mitosis. Plays a role in progression of mitosis. The sequence is that of Mitotic spindle assembly checkpoint protein MAD2B (mad2l2) from Xenopus laevis (African clawed frog).